We begin with the raw amino-acid sequence, 876 residues long: Phosphoenolpyruvate carboxylase (876 aa).

Active-site residues include His138 and Lys544.

This sequence belongs to the PEPCase type 1 family. The cofactor is Mg(2+).

The enzyme catalyses oxaloacetate + phosphate = phosphoenolpyruvate + hydrogencarbonate. Forms oxaloacetate, a four-carbon dicarboxylic acid source for the tricarboxylic acid cycle. This chain is Phosphoenolpyruvate carboxylase, found in Marinomonas sp. (strain MWYL1).